Reading from the N-terminus, the 1252-residue chain is DNA-directed RNA polymerase subunit beta (1252 aa).

Belongs to the RNA polymerase beta chain family. In terms of assembly, the RNAP catalytic core consists of 2 alpha, 1 beta, 1 beta' and 1 omega subunit. When a sigma factor is associated with the core the holoenzyme is formed, which can initiate transcription.

It catalyses the reaction RNA(n) + a ribonucleoside 5'-triphosphate = RNA(n+1) + diphosphate. Its function is as follows. DNA-dependent RNA polymerase catalyzes the transcription of DNA into RNA using the four ribonucleoside triphosphates as substrates. The protein is DNA-directed RNA polymerase subunit beta of Chlamydia caviae (strain ATCC VR-813 / DSM 19441 / 03DC25 / GPIC) (Chlamydophila caviae).